The following is a 324-amino-acid chain: uncharacterized protein (324 aa).

A run of 9 helical transmembrane segments spans residues Met34 to Leu54, Val76 to Leu96, Ile103 to Leu123, Ile127 to Tyr147, Pro158 to Ile178, Gly198 to Ser218, Tyr243 to Ile263, Leu275 to Phe295, and Leu297 to Ile317.

The protein localises to the membrane. This is an uncharacterized protein from Schizosaccharomyces pombe (strain 972 / ATCC 24843) (Fission yeast).